We begin with the raw amino-acid sequence, 211 residues long: MDFHRALSALFTNQAAVQPLLGSLGFPFNDGTSILTTALAAQSGGKKLDTPLGILPFDSLPTTNLLTPTKKIKLEDELCASPVSSRSSTVSSSHFSSPQRSPSRKMSVPIPEEKKDSAYFERRRKNNDAAKRSRDARRQKEEQIASKAHALERENMQLRGKVSSLEQEAAQLRFLLFSKISPANSEVSCESNDSTETNDSNDSKSDSTIEV.

Positions 83-101 are enriched in low complexity; the sequence is VSSRSSTVSSSHFSSPQRS. Disordered regions lie at residues 83–152 and 184–211; these read VSSR…HALE and NSEVSCESNDSTETNDSNDSKSDSTIEV. The segment covering 111–152 has biased composition (basic and acidic residues); sequence PEEKKDSAYFERRRKNNDAAKRSRDARRQKEEQIASKAHALE. A bZIP domain is found at 116-179; sequence DSAYFERRRK…AQLRFLLFSK (64 aa). Residues 122–140 are basic motif; it reads RRRKNNDAAKRSRDARRQK. Residues 144-172 are leucine-zipper; that stretch reads IASKAHALERENMQLRGKVSSLEQEAAQL. Positions 190–200 are enriched in low complexity; it reads ESNDSTETNDS. Positions 201–211 are enriched in basic and acidic residues; it reads NDSKSDSTIEV.

Belongs to the bZIP family. Interacts with NFIL3 transcription factor homolog atf-2.

It is found in the nucleus. Functionally, transcription factor. Required to activate programmed cell death in the sister cells of the serotoninergic neurosecretory motor (NSM) neurons. Negatively regulates the activity of ces-1 which in turn negatively regulates the activities of cell-killing genes. Binds to the DNA sequence 5'-RTTACGTAAY-3'. Involved in the development of the excretory duct cell, by positively modulating embryonic transcription of putative transcription factor lin-48, acting in concert with NFIL3 transcription factor homolog atf-2. Positively modulates expression of neuropeptide pigment dispersing factor homologs pdf-1 and pdf-2. The chain is Transcription factor ces-2 (ces-2) from Caenorhabditis elegans.